We begin with the raw amino-acid sequence, 483 residues long: GTPase Der (483 aa).

2 consecutive EngA-type G domains span residues 3–167 (FTLA…GEER) and 212–387 (LRIA…EIWN). GTP is bound by residues 9-16 (GRPNVGKS), 56-60 (DTAGL), 119-122 (NKAE), 218-225 (GRPNAGKS), 265-269 (DTAGM), and 330-333 (NKWD). Residues 388 to 472 (RRISTGRLNR…PIRLSLRTSD (85 aa)) form the KH-like domain.

This sequence belongs to the TRAFAC class TrmE-Era-EngA-EngB-Septin-like GTPase superfamily. EngA (Der) GTPase family. As to quaternary structure, associates with the 50S ribosomal subunit.

GTPase that plays an essential role in the late steps of ribosome biogenesis. This chain is GTPase Der, found in Brucella melitensis biotype 2 (strain ATCC 23457).